Here is a 395-residue protein sequence, read N- to C-terminus: Methylthioribose-1-phosphate isomerase (395 aa).

The Proton donor role is filled by D258.

The protein belongs to the eIF-2B alpha/beta/delta subunits family. MtnA subfamily.

Its subcellular location is the cytoplasm. It localises to the nucleus. It carries out the reaction 5-(methylsulfanyl)-alpha-D-ribose 1-phosphate = 5-(methylsulfanyl)-D-ribulose 1-phosphate. It participates in amino-acid biosynthesis; L-methionine biosynthesis via salvage pathway; L-methionine from S-methyl-5-thio-alpha-D-ribose 1-phosphate: step 1/6. Its function is as follows. Catalyzes the interconversion of methylthioribose-1-phosphate (MTR-1-P) into methylthioribulose-1-phosphate (MTRu-1-P). In Podospora anserina (strain S / ATCC MYA-4624 / DSM 980 / FGSC 10383) (Pleurage anserina), this protein is Methylthioribose-1-phosphate isomerase.